Consider the following 138-residue polypeptide: Fusaristatin A biosynthesis cluster protein FGSG_08206 (138 aa).

Residues Val-33–Phe-130 form the Stress-response A/B barrel domain.

The protein operates within secondary metabolite biosynthesis. Functionally, part of the gene cluster that mediates the biosynthesis of the lipopeptide fusaristatin A. Fusaristatin A consists of a polyketide chain linked to three amino acid residues glutamine (Gln), dehydroalanine (dehydro-Ala), and beta-aminoisobutyric acid. The biosynthesis starts with formation of a linear polyketide chain by the highly reducing polyketide synthase PKS6. The gene cluster does not contain an acyl-CoA ligase or an acyl-transferase, and it is therefore predicted that the polyketide is transferred directly to the nonribosomal peptide synthetase NRPS7. Modules 1-3 from NRPS7 incorporate dehydro-Ala, Gln, and beta-aminoisobutyric acid in the compound, which is released by cyclization. The beta-aminoisobutyric acid units are most likely not freely available to the NRPS, but can be synthesized from thymine, which requires a dehydrogenase, a monooxygenase, and an aminotransferase. The fusaristatin A cluster contains a cytochrome P450 monooxygenase (FGSG_08207) and an aminotransferase (FGSG_17085), which theoretically can perform two of the enzymatic steps. The enzymes may however also be involved in biosynthesis of dehydroalanine or modification of the polyketide. The dehydro-Ala residue can be a result of cyclization, where serine is dehydrated. The last gene of the cluster encodes a protein with an A/B barrel domain found in variable enzymes, which hampers functional prediction. The polypeptide is Fusaristatin A biosynthesis cluster protein FGSG_08206 (Gibberella zeae (strain ATCC MYA-4620 / CBS 123657 / FGSC 9075 / NRRL 31084 / PH-1) (Wheat head blight fungus)).